The chain runs to 99 residues: MMNMQNMMKQAQKLQKQMEQKQADLAAMQFTGKSAQDLVTATFTGDKKLVGIDFKEAVVDPEDVETLQDMTTQAINDALTQIDETTKKTLGAFAGKLPF.

Belongs to the YbaB/EbfC family. In terms of assembly, homodimer.

The protein resides in the cytoplasm. Its subcellular location is the nucleoid. In terms of biological role, binds to DNA and alters its conformation. May be involved in regulation of gene expression, nucleoid organization and DNA protection. The sequence is that of Nucleoid-associated protein SPy_1862/M5005_Spy1580 from Streptococcus pyogenes serotype M1.